Consider the following 304-residue polypeptide: Agmatinase (304 aa).

Mn(2+) contacts are provided by His-126, Asp-149, His-151, Asp-153, Asp-230, and Asp-232.

This sequence belongs to the arginase family. Agmatinase subfamily. It depends on Mn(2+) as a cofactor.

It carries out the reaction agmatine + H2O = urea + putrescine. The protein operates within amine and polyamine biosynthesis; putrescine biosynthesis via agmatine pathway; putrescine from agmatine: step 1/1. In terms of biological role, catalyzes the formation of putrescine from agmatine. The chain is Agmatinase from Edwardsiella ictaluri (strain 93-146).